We begin with the raw amino-acid sequence, 284 residues long: Signal peptidase I (284 aa).

Residues 4–22 (NFPLLLVIAVAVCGLLALL) form a helical membrane-spanning segment. The Cytoplasmic portion of the chain corresponds to 23–58 (DLVFFAPRRRSAIASYQGSVSQPDAVVIEKLNKEPL). A helical membrane pass occupies residues 59-77 (LVEYGKSFFPVLFIVLVLR). Residues 78–284 (SFLVEPFQIP…PNFSRVGLIK (207 aa)) are Periplasmic-facing. Active-site residues include Ser90 and Lys145.

Belongs to the peptidase S26 family.

The protein resides in the cell inner membrane. It catalyses the reaction Cleavage of hydrophobic, N-terminal signal or leader sequences from secreted and periplasmic proteins.. The protein is Signal peptidase I (lepB) of Pseudomonas fluorescens.